Reading from the N-terminus, the 239-residue chain is 1-(5-phosphoribosyl)-5-[(5-phosphoribosylamino)methylideneamino] imidazole-4-carboxamide isomerase (239 aa).

D8 (proton acceptor) is an active-site residue. Catalysis depends on D129, which acts as the Proton donor.

It belongs to the HisA/HisF family.

The protein localises to the cytoplasm. The enzyme catalyses 1-(5-phospho-beta-D-ribosyl)-5-[(5-phospho-beta-D-ribosylamino)methylideneamino]imidazole-4-carboxamide = 5-[(5-phospho-1-deoxy-D-ribulos-1-ylimino)methylamino]-1-(5-phospho-beta-D-ribosyl)imidazole-4-carboxamide. Its pathway is amino-acid biosynthesis; L-histidine biosynthesis; L-histidine from 5-phospho-alpha-D-ribose 1-diphosphate: step 4/9. This Bacillus thuringiensis (strain Al Hakam) protein is 1-(5-phosphoribosyl)-5-[(5-phosphoribosylamino)methylideneamino] imidazole-4-carboxamide isomerase.